The primary structure comprises 615 residues: MAVYVGMLRLGRLCAGSSGVLGARAALSRSWQEARLQGVRFLSSREVDRMVSTPIGGLSYVQGCTKKHLNSKTVGQCLETTAQRVPEREALVVLHEDVRLTFAQLKEEVDKAASGLLSIGLCKGDRLGMWGPNSYAWVLMQLATAQAGIILVSVNPAYQAMELEYVLKKVGCKALVFPKQFKTQQYYNVLKQICPEVENAQPGALKSQRLPDLTTVISVDAPLPGTLLLDEVVAAGSTRQHLDQLQYNQQFLSCHDPINIQFTSGTTGSPKGATLSHYNIVNNSNILGERLKLHEKTPEQLRMILPNPLYHCLGSVAGTMMCLMYGATLILASPIFNGKKALEAISRERGTFLYGTPTMFVDILNQPDFSSYDISTMCGGVIAGSPAPPELIRAIINKINMKDLVVAYGTTENSPVTFAHFPEDTVEQKAESVGRIMPHTEARIMNMEAGTLAKLNTPGELCIRGYCVMLGYWGEPQKTEEAVDQDKWYWTGDVATMNEQGFCKIVGRSKDMIIRGGENIYPAELEDFFHTHPKVQEVQVVGVKDDRMGEEICACIRLKDGEETTVEEIKAFCKGKISHFKIPKYIVFVTNYPLTISGKIQKFKLREQMERHLNL.

The N-terminal 41 residues, 1 to 41, are a transit peptide targeting the mitochondrion; it reads MAVYVGMLRLGRLCAGSSGVLGARAALSRSWQEARLQGVRF. N6-acetyllysine is present on Lys179. Residue Lys182 is modified to N6-acetyllysine; alternate. Residue Lys182 is modified to N6-succinyllysine; alternate. 263 to 271 lines the ATP pocket; the sequence is TSGTTGSPK. N6-acetyllysine occurs at positions 340 and 398. Residue Lys478 is modified to N6-succinyllysine. Residues Asp493 and Arg508 each contribute to the ATP site. An N6-acetyllysine modification is found at Lys510. N6-acetyllysine; alternate occurs at positions 544 and 570. Residues Lys544 and Lys570 each carry the N6-succinyllysine; alternate modification. Position 599 (Lys599) interacts with ATP. An N6-succinyllysine modification is found at Lys599.

This sequence belongs to the ATP-dependent AMP-binding enzyme family.

It is found in the mitochondrion. The enzyme catalyses a medium-chain fatty acid + ATP + CoA = a medium-chain fatty acyl-CoA + AMP + diphosphate. The catalysed reaction is octanoate + ATP + CoA = octanoyl-CoA + AMP + diphosphate. In terms of biological role, acyl-CoA synthases catalyze the initial reaction in fatty acid metabolism, by forming a thioester with CoA. Has some preference toward medium-chain substrates. Plays a role in adipocyte differentiation. This chain is Medium-chain acyl-CoA ligase ACSF2, mitochondrial, found in Homo sapiens (Human).